We begin with the raw amino-acid sequence, 572 residues long: Dihydroxy-acid dehydratase (572 aa).

Cys-54 is a [2Fe-2S] cluster binding site. Asp-86 is a binding site for Mg(2+). Cys-127 is a binding site for [2Fe-2S] cluster. Asp-128 and Lys-129 together coordinate Mg(2+). Lys-129 bears the N6-carboxylysine mark. Cys-199 serves as a coordination point for [2Fe-2S] cluster. Residue Glu-449 participates in Mg(2+) binding. The active-site Proton acceptor is the Ser-475.

Belongs to the IlvD/Edd family. In terms of assembly, homodimer. Requires [2Fe-2S] cluster as cofactor. The cofactor is Mg(2+).

It catalyses the reaction (2R)-2,3-dihydroxy-3-methylbutanoate = 3-methyl-2-oxobutanoate + H2O. The enzyme catalyses (2R,3R)-2,3-dihydroxy-3-methylpentanoate = (S)-3-methyl-2-oxopentanoate + H2O. It participates in amino-acid biosynthesis; L-isoleucine biosynthesis; L-isoleucine from 2-oxobutanoate: step 3/4. The protein operates within amino-acid biosynthesis; L-valine biosynthesis; L-valine from pyruvate: step 3/4. Its function is as follows. Functions in the biosynthesis of branched-chain amino acids. Catalyzes the dehydration of (2R,3R)-2,3-dihydroxy-3-methylpentanoate (2,3-dihydroxy-3-methylvalerate) into 2-oxo-3-methylpentanoate (2-oxo-3-methylvalerate) and of (2R)-2,3-dihydroxy-3-methylbutanoate (2,3-dihydroxyisovalerate) into 2-oxo-3-methylbutanoate (2-oxoisovalerate), the penultimate precursor to L-isoleucine and L-valine, respectively. This chain is Dihydroxy-acid dehydratase, found in Pelagibacter ubique (strain HTCC1062).